The primary structure comprises 96 residues: MLTGKQKRFLRSKAHHLTPIFQVGKGGVNDNMIKQIAEALEARELIKVSVLQNCEEDKNDVAEALVKGSRSQLVQTIGNTIVLYKESKENKQIELP.

The region spanning 1-96 (MLTGKQKRFL…SKENKQIELP (96 aa)) is the CRM domain.

This Bacillus subtilis (strain 168) protein is Probable RNA-binding protein YqeI (yqeI).